A 742-amino-acid polypeptide reads, in one-letter code: 5-methyltetrahydropteroyltriglutamate--homocysteine methyltransferase (742 aa).

5-methyltetrahydropteroyltri-L-glutamate contacts are provided by residues 18–21 (REWK) and Lys112. L-homocysteine contacts are provided by residues 420-422 (IGS) and Glu473. L-methionine-binding positions include 420 to 422 (IGS) and Glu473. Residue Trp550 coordinates 5-methyltetrahydropteroyltri-L-glutamate. Position 588 (Asp588) interacts with L-homocysteine. Asp588 is a binding site for L-methionine. Glu594 contacts 5-methyltetrahydropteroyltri-L-glutamate. 3 residues coordinate Zn(2+): His630, Cys632, and Glu654. His683 serves as the catalytic Proton donor. Residue Cys715 participates in Zn(2+) binding.

This sequence belongs to the vitamin-B12 independent methionine synthase family. Zn(2+) is required as a cofactor.

It carries out the reaction 5-methyltetrahydropteroyltri-L-glutamate + L-homocysteine = tetrahydropteroyltri-L-glutamate + L-methionine. It participates in amino-acid biosynthesis; L-methionine biosynthesis via de novo pathway; L-methionine from L-homocysteine (MetE route): step 1/1. Catalyzes the transfer of a methyl group from 5-methyltetrahydrofolate to homocysteine resulting in methionine formation. The polypeptide is 5-methyltetrahydropteroyltriglutamate--homocysteine methyltransferase (Staphylococcus aureus (strain bovine RF122 / ET3-1)).